The sequence spans 125 residues: Mitochondrial import inner membrane translocase subunit tim16-A (125 aa).

The J-like stretch occupies residues 58 to 110; the sequence is EAQQILNVSKLTPEEIQKNYEHLFKVNDKGLGGSFYLQSKVVRAKERLDQEME.

It belongs to the TIM16/PAM16 family. In terms of assembly, probable component of the PAM complex at least composed of 1 mitochondrial HSP70 protein, 1 GRPE, 1 TIMM44, 1 TIMM16/PAM16 and 1 TIMM14. Associates with the TIM23 complex.

The protein resides in the mitochondrion inner membrane. Regulates ATP-dependent protein translocation into the mitochondrial matrix. This Xenopus laevis (African clawed frog) protein is Mitochondrial import inner membrane translocase subunit tim16-A (pam16-a).